The sequence spans 257 residues: Snake venom serine protease KN1 (257 aa).

The first 18 residues, methionine 1 to alanine 18, serve as a signal peptide directing secretion. Residues glutamine 19–leucine 24 constitute a propeptide that is removed on maturation. Positions valine 25–alanine 248 constitute a Peptidase S1 domain. 5 disulfides stabilise this stretch: cysteine 31–cysteine 162, cysteine 49–cysteine 65, cysteine 141–cysteine 209, cysteine 173–cysteine 188, and cysteine 199–cysteine 224. The active-site Charge relay system is the histidine 64. An N-linked (GlcNAc...) asparagine glycan is attached at asparagine 102. The Charge relay system role is filled by aspartate 109. Residues asparagine 120 and asparagine 121 are each glycosylated (N-linked (GlcNAc...) asparagine). Serine 203 acts as the Charge relay system in catalysis.

This sequence belongs to the peptidase S1 family. Snake venom subfamily. As to quaternary structure, monomer. As to expression, expressed by the venom gland.

The protein resides in the secreted. Functionally, snake venom serine protease that may act in the hemostasis system of the prey. This Trimeresurus stejnegeri (Chinese green tree viper) protein is Snake venom serine protease KN1.